We begin with the raw amino-acid sequence, 218 residues long: MICIPVIDKDVSDAINSAKEALKYGDIVEFRIDLLNDVNFKDIEEFSKIPSIITIRAEWEGGAWRKSNEERIELLKNAIKNNAKFIDIELKEEKNLELVKYRNEIGSTTKIIVSYHDFEKTPEIDELIDVVEKELKIGDIAKFATFAHSKEDTLKILNLMNRYSGKIIAIGMGESGKLTRILGLDFGSILTFASMGGKASAPGQVDVKKLKEILKLIN.

3-dehydroquinate is bound by residues 29 to 31 (EFR) and Arg-56. His-116 functions as the Proton donor/acceptor in the catalytic mechanism. Lys-142 acts as the Schiff-base intermediate with substrate in catalysis. Positions 180, 200, and 204 each coordinate 3-dehydroquinate.

It belongs to the type-I 3-dehydroquinase family. Homodimer.

It catalyses the reaction 3-dehydroquinate = 3-dehydroshikimate + H2O. It participates in metabolic intermediate biosynthesis; chorismate biosynthesis; chorismate from D-erythrose 4-phosphate and phosphoenolpyruvate: step 3/7. Functionally, involved in the third step of the chorismate pathway, which leads to the biosynthesis of aromatic amino acids. Catalyzes the cis-dehydration of 3-dehydroquinate (DHQ) and introduces the first double bond of the aromatic ring to yield 3-dehydroshikimate. The protein is 3-dehydroquinate dehydratase of Methanococcus maripaludis (strain DSM 14266 / JCM 13030 / NBRC 101832 / S2 / LL).